A 364-amino-acid polypeptide reads, in one-letter code: Aminomethyltransferase (364 aa).

This sequence belongs to the GcvT family. In terms of assembly, the glycine cleavage system is composed of four proteins: P, T, L and H.

The catalysed reaction is N(6)-[(R)-S(8)-aminomethyldihydrolipoyl]-L-lysyl-[protein] + (6S)-5,6,7,8-tetrahydrofolate = N(6)-[(R)-dihydrolipoyl]-L-lysyl-[protein] + (6R)-5,10-methylene-5,6,7,8-tetrahydrofolate + NH4(+). Functionally, the glycine cleavage system catalyzes the degradation of glycine. The chain is Aminomethyltransferase from Enterobacter sp. (strain 638).